A 355-amino-acid chain; its full sequence is WAT1-related protein At3g28130 (355 aa).

Transmembrane regions (helical) follow at residues 11-31, 42-62, 80-100, 104-124, 136-156, 186-206, 218-238, 244-264, 290-310, and 311-331; these read AVLL…NTLF, YTFL…SHIF, IGVL…GIEY, TLAS…AIIF, SVAK…VVLY, WIIG…AFIL, FTVS…IGIV, PSIW…GGIF, LSIL…FYLG, and SLVG…GKAK. In terms of domain architecture, EamA spans 29-154; that stretch reads TLFKAATSKG…VSLVGALVVV (126 aa).

Belongs to the drug/metabolite transporter (DMT) superfamily. Plant drug/metabolite exporter (P-DME) (TC 2.A.7.4) family.

The protein resides in the membrane. This is WAT1-related protein At3g28130 from Arabidopsis thaliana (Mouse-ear cress).